Consider the following 460-residue polypeptide: GTPase Der (460 aa).

2 consecutive EngA-type G domains span residues 2-164 and 196-368; these read QSII…HEEF and IRVG…ENFT. GTP-binding positions include 8–15, 55–59, 116–119, 202–209, 249–253, and 313–316; these read GKPNVGKS, DSGGL, NKVD, GRVNVGKS, DTAGI, and NKWD. The region spanning 369 to 453 is the KH-like domain; it reads QKIQTSKLNT…PLVIASRKKG (85 aa).

It belongs to the TRAFAC class TrmE-Era-EngA-EngB-Septin-like GTPase superfamily. EngA (Der) GTPase family. As to quaternary structure, associates with the 50S ribosomal subunit.

Functionally, GTPase that plays an essential role in the late steps of ribosome biogenesis. The polypeptide is GTPase Der (Campylobacter jejuni subsp. jejuni serotype O:6 (strain 81116 / NCTC 11828)).